Here is a 421-residue protein sequence, read N- to C-terminus: UDP-N-acetylglucosamine 1-carboxyvinyltransferase (421 aa).

22-23 contacts phosphoenolpyruvate; it reads KN. Arg93 provides a ligand contact to UDP-N-acetyl-alpha-D-glucosamine. The Proton donor role is filled by Cys117. Cys117 is subject to 2-(S-cysteinyl)pyruvic acid O-phosphothioketal. UDP-N-acetyl-alpha-D-glucosamine contacts are provided by residues 122-126, Asp308, and Val330; that span reads RPVDL.

It belongs to the EPSP synthase family. MurA subfamily.

Its subcellular location is the cytoplasm. The enzyme catalyses phosphoenolpyruvate + UDP-N-acetyl-alpha-D-glucosamine = UDP-N-acetyl-3-O-(1-carboxyvinyl)-alpha-D-glucosamine + phosphate. Its pathway is cell wall biogenesis; peptidoglycan biosynthesis. Functionally, cell wall formation. Adds enolpyruvyl to UDP-N-acetylglucosamine. The protein is UDP-N-acetylglucosamine 1-carboxyvinyltransferase of Azotobacter vinelandii (strain DJ / ATCC BAA-1303).